The chain runs to 323 residues: Aspartate carbamoyltransferase catalytic subunit (323 aa).

The carbamoyl phosphate site is built by Arg-61 and Thr-62. Lys-89 contributes to the L-aspartate binding site. Arg-111, His-144, and Gln-147 together coordinate carbamoyl phosphate. L-aspartate-binding residues include Arg-184 and Arg-238. Carbamoyl phosphate-binding residues include Gly-279 and Pro-280.

It belongs to the aspartate/ornithine carbamoyltransferase superfamily. ATCase family. As to quaternary structure, heterododecamer (2C3:3R2) of six catalytic PyrB chains organized as two trimers (C3), and six regulatory PyrI chains organized as three dimers (R2).

The catalysed reaction is carbamoyl phosphate + L-aspartate = N-carbamoyl-L-aspartate + phosphate + H(+). It participates in pyrimidine metabolism; UMP biosynthesis via de novo pathway; (S)-dihydroorotate from bicarbonate: step 2/3. Functionally, catalyzes the condensation of carbamoyl phosphate and aspartate to form carbamoyl aspartate and inorganic phosphate, the committed step in the de novo pyrimidine nucleotide biosynthesis pathway. This Acaryochloris marina (strain MBIC 11017) protein is Aspartate carbamoyltransferase catalytic subunit.